The sequence spans 351 residues: dTDP-glucose 4,6-dehydratase (351 aa).

NAD(+)-binding positions include 12 to 13, 32 to 35, 58 to 59, 80 to 84, and threonine 99; these read FI, DALT, DI, and FAAES. Serine 84 serves as a coordination point for substrate. Substrate is bound at residue threonine 133. The active-site Proton donor is aspartate 134. Residues glutamate 135 and tyrosine 158 each act as proton acceptor in the active site. Residue 158–162 coordinates NAD(+); the sequence is YSASK. Residue asparagine 187 participates in substrate binding. Asparagine 188 contributes to the NAD(+) binding site. Residues 197 to 198, 213 to 215, arginine 222, asparagine 257, and 289 to 293 contribute to the substrate site; these read KL, PVY, and DRPGH.

It belongs to the NAD(P)-dependent epimerase/dehydratase family. dTDP-glucose dehydratase subfamily. Homodimer. Requires NAD(+) as cofactor.

The enzyme catalyses dTDP-alpha-D-glucose = dTDP-4-dehydro-6-deoxy-alpha-D-glucose + H2O. It functions in the pathway carbohydrate biosynthesis; dTDP-L-rhamnose biosynthesis. Its pathway is bacterial outer membrane biogenesis; LPS O-antigen biosynthesis. Its function is as follows. Catalyzes the dehydration of dTDP-D-glucose to form dTDP-6-deoxy-D-xylo-4-hexulose via a three-step process involving oxidation, dehydration and reduction. The polypeptide is dTDP-glucose 4,6-dehydratase (rfbB) (Xanthomonas campestris pv. campestris (strain ATCC 33913 / DSM 3586 / NCPPB 528 / LMG 568 / P 25)).